The primary structure comprises 185 residues: Large ribosomal subunit protein uL5 (185 aa).

This sequence belongs to the universal ribosomal protein uL5 family. In terms of assembly, part of the 50S ribosomal subunit; part of the 5S rRNA/L5/L18/L25 subcomplex. Contacts the 5S rRNA and the P site tRNA. Forms a bridge to the 30S subunit in the 70S ribosome.

This is one of the proteins that bind and probably mediate the attachment of the 5S RNA into the large ribosomal subunit, where it forms part of the central protuberance. In the 70S ribosome it contacts protein S13 of the 30S subunit (bridge B1b), connecting the 2 subunits; this bridge is implicated in subunit movement. Contacts the P site tRNA; the 5S rRNA and some of its associated proteins might help stabilize positioning of ribosome-bound tRNAs. This Caulobacter sp. (strain K31) protein is Large ribosomal subunit protein uL5.